The primary structure comprises 687 residues: Polyphosphate kinase (687 aa).

Asparagine 45 serves as a coordination point for ATP. Mg(2+) contacts are provided by arginine 375 and arginine 405. The active-site Phosphohistidine intermediate is the histidine 435. Positions 472, 568, and 596 each coordinate ATP.

This sequence belongs to the polyphosphate kinase 1 (PPK1) family. Requires Mg(2+) as cofactor. In terms of processing, an intermediate of this reaction is the autophosphorylated ppk in which a phosphate is covalently linked to a histidine residue through a N-P bond.

It carries out the reaction [phosphate](n) + ATP = [phosphate](n+1) + ADP. Its function is as follows. Catalyzes the reversible transfer of the terminal phosphate of ATP to form a long-chain polyphosphate (polyP). The polypeptide is Polyphosphate kinase (Paraburkholderia phytofirmans (strain DSM 17436 / LMG 22146 / PsJN) (Burkholderia phytofirmans)).